A 202-amino-acid chain; its full sequence is Small ribosomal subunit protein uS4 (202 aa).

Positions 91-154 (SMLSSVLYNS…VNLPSVLAAI (64 aa)) constitute an S4 RNA-binding domain.

This sequence belongs to the universal ribosomal protein uS4 family. Part of the 30S ribosomal subunit. Contacts protein S5. The interaction surface between S4 and S5 is involved in control of translational fidelity.

One of the primary rRNA binding proteins, it binds directly to 16S rRNA where it nucleates assembly of the body of the 30S subunit. Functionally, with S5 and S12 plays an important role in translational accuracy. The protein is Small ribosomal subunit protein uS4 of Ehrlichia ruminantium (strain Gardel).